A 168-amino-acid polypeptide reads, in one-letter code: Photosystem I assembly protein Ycf3 (168 aa).

TPR repeat units lie at residues 35–68, 72–105, and 120–153; these read AFTY…EIDP, SYIL…NPFL, and GEQA…TPGN.

The protein belongs to the Ycf3 family.

The protein localises to the plastid. Its subcellular location is the chloroplast thylakoid membrane. Its function is as follows. Essential for the assembly of the photosystem I (PSI) complex. May act as a chaperone-like factor to guide the assembly of the PSI subunits. The protein is Photosystem I assembly protein Ycf3 of Solanum bulbocastanum (Wild potato).